Consider the following 873-residue polypeptide: Protein translocase subunit SecA (873 aa).

ATP is bound by residues glutamine 85, 103–107 (GEGKT), and aspartate 492. Basic and acidic residues predominate over residues 835 to 856 (RYAEEEGKQPIRKENQIGRNDD). The segment at 835–873 (RYAEEEGKQPIRKENQIGRNDDCPCGSGKKYKKCCGKNA) is disordered. Zn(2+) is bound by residues cysteine 857, cysteine 859, cysteine 868, and cysteine 869. A compositionally biased stretch (basic residues) spans 863 to 873 (KKYKKCCGKNA).

The protein belongs to the SecA family. Monomer and homodimer. Part of the essential Sec protein translocation apparatus which comprises SecA, SecYEG and auxiliary proteins SecDF. Other proteins may also be involved. It depends on Zn(2+) as a cofactor.

It is found in the cell membrane. It localises to the cytoplasm. It carries out the reaction ATP + H2O + cellular proteinSide 1 = ADP + phosphate + cellular proteinSide 2.. In terms of biological role, part of the Sec protein translocase complex. Interacts with the SecYEG preprotein conducting channel. Has a central role in coupling the hydrolysis of ATP to the transfer of proteins into and across the cell membrane, serving as an ATP-driven molecular motor driving the stepwise translocation of polypeptide chains across the membrane. This chain is Protein translocase subunit SecA, found in Desulforamulus reducens (strain ATCC BAA-1160 / DSM 100696 / MI-1) (Desulfotomaculum reducens).